The primary structure comprises 180 residues: Probable RNA 2'-phosphotransferase (180 aa).

The protein belongs to the KptA/TPT1 family.

Its function is as follows. Removes the 2'-phosphate from RNA via an intermediate in which the phosphate is ADP-ribosylated by NAD followed by a presumed transesterification to release the RNA and generate ADP-ribose 1''-2''-cyclic phosphate (APPR&gt;P). May function as an ADP-ribosylase. This is Probable RNA 2'-phosphotransferase from Pectobacterium atrosepticum (strain SCRI 1043 / ATCC BAA-672) (Erwinia carotovora subsp. atroseptica).